The sequence spans 348 residues: Spermatogenesis-associated protein 32 (348 aa).

Residues 27 to 36 show a composition bias toward basic and acidic residues; that stretch reads YHHHHHPLED. Residues 27 to 61 form a disordered region; it reads YHHHHHPLEDNKDEDNEMGTELSSMKPPPKVDPDP. 2 positions are modified to phosphoserine: S149 and S152. A disordered region spans residues 308-329; that stretch reads APATSPELQEDKDDSVPGTKKG. T330 is modified (phosphothreonine).

Interacts with syntaxin-1 and ACTB. Abundantly expressed in testes. Expressed in germ cells, but not in Sertoli or Leydig cells of the adult testis. Localized at the acrosomal region of the round and elongated spermatids at stages VIII-X.

The polypeptide is Spermatogenesis-associated protein 32 (Spata32) (Rattus norvegicus (Rat)).